We begin with the raw amino-acid sequence, 89 residues long: UPF0367 protein CYA_1023 (89 aa).

The disordered stretch occupies residues 69–89 (TKSGGPGAPGTRPGFLAQLQG).

Belongs to the UPF0367 family.

The polypeptide is UPF0367 protein CYA_1023 (Synechococcus sp. (strain JA-3-3Ab) (Cyanobacteria bacterium Yellowstone A-Prime)).